The sequence spans 448 residues: Homogentisate 1,2-dioxygenase (448 aa).

His303 functions as the Proton acceptor in the catalytic mechanism. Fe cation contacts are provided by His346 and Glu352. Residues Tyr361 and His382 each coordinate homogentisate. Position 382 (His382) interacts with Fe cation.

It belongs to the homogentisate dioxygenase family. In terms of assembly, hexamer; dimer of trimers. The cofactor is Fe cation.

It carries out the reaction homogentisate + O2 = 4-maleylacetoacetate + H(+). Its pathway is amino-acid degradation; L-phenylalanine degradation; acetoacetate and fumarate from L-phenylalanine: step 4/6. In terms of biological role, involved in the catabolism of homogentisate (2,5-dihydroxyphenylacetate or 2,5-OH-PhAc), a central intermediate in the degradation of phenylalanine and tyrosine. Catalyzes the oxidative ring cleavage of the aromatic ring of homogentisate to yield maleylacetoacetate. This chain is Homogentisate 1,2-dioxygenase, found in Rhodopseudomonas palustris (strain BisA53).